Here is a 366-residue protein sequence, read N- to C-terminus: Methylthioribose-1-phosphate isomerase (366 aa).

Residue Asp-260 is the Proton donor of the active site.

Belongs to the eIF-2B alpha/beta/delta subunits family. MtnA subfamily.

The protein localises to the cytoplasm. It localises to the nucleus. The enzyme catalyses 5-(methylsulfanyl)-alpha-D-ribose 1-phosphate = 5-(methylsulfanyl)-D-ribulose 1-phosphate. It functions in the pathway amino-acid biosynthesis; L-methionine biosynthesis via salvage pathway; L-methionine from S-methyl-5-thio-alpha-D-ribose 1-phosphate: step 1/6. Its function is as follows. Catalyzes the interconversion of methylthioribose-1-phosphate (MTR-1-P) into methylthioribulose-1-phosphate (MTRu-1-P). This Caenorhabditis briggsae protein is Methylthioribose-1-phosphate isomerase.